Consider the following 509-residue polypeptide: Circadian clock oscillator protein KaiC (509 aa).

2 consecutive KaiC domains span residues M1 to F243 and I257 to N509. Residues G45, T46, G47, K48, T49, S85, K220, L221, R222, T224, H226, D237, T286, G287, T288, G289, K290, and T291 each contribute to the ATP site. Residue T49 participates in Mg(2+) binding. Residues T291 and E314 each contribute to the Mg(2+) site. Residue W327 participates in ATP binding. Position 427 is a phosphoserine; by autocatalysis (S427). T428 carries the post-translational modification Phosphothreonine; by autocatalysis. The ATP site is built by R447, K453, M454, R455, S457, H459, and K461.

It belongs to the KaiC family. As to quaternary structure, homohexamer; hexamerization is dependent on ATP-binding. Component of the KaiBC complex. KaiC interacts with SasA, activating its autokinase function and leading to RpaA activation. Mg(2+) is required as a cofactor. In terms of processing, phosphorylated on serine and threonine residues by autocatalysis. Has a 4 step phosphorylation cycle; the autokinase acts first on Thr-428, then Ser-427. When Ser-427 is modified KaiC switches to an autophosphatase mode, acting first on phospho-Thr-428 then phospho-Ser-427.

The catalysed reaction is L-seryl-[protein] + ATP = O-phospho-L-seryl-[protein] + ADP + H(+). The enzyme catalyses L-threonyl-[protein] + ATP = O-phospho-L-threonyl-[protein] + ADP + H(+). It catalyses the reaction ATP + H2O = ADP + phosphate + H(+). In terms of biological role, central component of the KaiBC oscillator complex, which constitutes the main circadian regulator in cyanobacteria. Its composition changes during the circadian cycle to control KaiC phosphorylation. Autophosphorylates and has a weak ATPase activity; ATPase activity defines the circadian period. This Prochlorococcus marinus subsp. pastoris (strain CCMP1986 / NIES-2087 / MED4) protein is Circadian clock oscillator protein KaiC.